A 59-amino-acid chain; its full sequence is Embryonic testis differentiation protein homolog C (59 aa).

Residues 1–22 are disordered; sequence MDKELPKASPSEPALNIKKSGK.

The polypeptide is Embryonic testis differentiation protein homolog C (Homo sapiens (Human)).